A 369-amino-acid chain; its full sequence is Cobalt-precorrin-5B C(1)-methyltransferase (369 aa).

It belongs to the CbiD family.

It catalyses the reaction Co-precorrin-5B + S-adenosyl-L-methionine = Co-precorrin-6A + S-adenosyl-L-homocysteine. It functions in the pathway cofactor biosynthesis; adenosylcobalamin biosynthesis; cob(II)yrinate a,c-diamide from sirohydrochlorin (anaerobic route): step 6/10. Catalyzes the methylation of C-1 in cobalt-precorrin-5B to form cobalt-precorrin-6A. The chain is Cobalt-precorrin-5B C(1)-methyltransferase from Leptospira borgpetersenii serovar Hardjo-bovis (strain JB197).